The sequence spans 131 residues: D-ribose pyranase (131 aa).

Residue histidine 20 is the Proton donor of the active site. Substrate-binding positions include aspartate 28, histidine 98, and 120-122 (YAN).

The protein belongs to the RbsD / FucU family. RbsD subfamily. In terms of assembly, homodecamer.

It localises to the cytoplasm. The catalysed reaction is beta-D-ribopyranose = beta-D-ribofuranose. It participates in carbohydrate metabolism; D-ribose degradation; D-ribose 5-phosphate from beta-D-ribopyranose: step 1/2. Functionally, catalyzes the interconversion of beta-pyran and beta-furan forms of D-ribose. In Clostridium novyi (strain NT), this protein is D-ribose pyranase.